We begin with the raw amino-acid sequence, 163 residues long: Putative 4-hydroxy-4-methyl-2-oxoglutarate aldolase (163 aa).

Substrate-binding positions include 76–79 (GDML) and arginine 98. Aspartate 99 serves as a coordination point for a divalent metal cation.

Belongs to the class II aldolase/RraA-like family. In terms of assembly, homotrimer. The cofactor is a divalent metal cation.

It catalyses the reaction 4-hydroxy-4-methyl-2-oxoglutarate = 2 pyruvate. It carries out the reaction oxaloacetate + H(+) = pyruvate + CO2. Catalyzes the aldol cleavage of 4-hydroxy-4-methyl-2-oxoglutarate (HMG) into 2 molecules of pyruvate. Also contains a secondary oxaloacetate (OAA) decarboxylase activity due to the common pyruvate enolate transition state formed following C-C bond cleavage in the retro-aldol and decarboxylation reactions. This Pseudomonas fluorescens (strain ATCC BAA-477 / NRRL B-23932 / Pf-5) protein is Putative 4-hydroxy-4-methyl-2-oxoglutarate aldolase.